The sequence spans 234 residues: Large ribosomal subunit protein uL1 (234 aa).

The protein belongs to the universal ribosomal protein uL1 family. In terms of assembly, part of the 50S ribosomal subunit.

Functionally, binds directly to 23S rRNA. The L1 stalk is quite mobile in the ribosome, and is involved in E site tRNA release. Protein L1 is also a translational repressor protein, it controls the translation of the L11 operon by binding to its mRNA. In Salmonella agona (strain SL483), this protein is Large ribosomal subunit protein uL1.